Here is a 635-residue protein sequence, read N- to C-terminus: Biosynthetic arginine decarboxylase (635 aa).

Position 103 is an N6-(pyridoxal phosphate)lysine (Lys-103). 283–293 provides a ligand contact to substrate; that stretch reads FDVGGGLGVDY.

Belongs to the Orn/Lys/Arg decarboxylase class-II family. SpeA subfamily. Requires Mg(2+) as cofactor. It depends on pyridoxal 5'-phosphate as a cofactor.

The catalysed reaction is L-arginine + H(+) = agmatine + CO2. Its pathway is amine and polyamine biosynthesis; agmatine biosynthesis; agmatine from L-arginine: step 1/1. Catalyzes the biosynthesis of agmatine from arginine. The protein is Biosynthetic arginine decarboxylase of Proteus mirabilis (strain HI4320).